A 430-amino-acid chain; its full sequence is Transcription factor E2F1 (430 aa).

The tract at residues alanine 62 to phenylalanine 103 is cyclin A:CDK2 binding. The tract at residues lysine 84–leucine 186 is interaction with BIRC2/c-IAP1. Residues tyrosine 95 to tyrosine 123 are disordered. A DNA-binding region spans residues glycine 105–histidine 189. Lysine 112, lysine 115, and lysine 120 each carry N6-acetyllysine. The interval leucine 148–leucine 169 is leucine-zipper. Positions glutamate 153–histidine 189 match the DEF box motif. The residue at position 180 (lysine 180) is an N6-methyllysine; by SETD7. The tract at residues glycine 187 to serine 375 is required for interaction with TRIM28. Positions threonine 190 to isoleucine 279 are dimerization. The disordered stretch occupies residues proline 294–serine 340. Pro residues predominate over residues alanine 324 to threonine 333. The segment at proline 361–phenylalanine 430 is transactivation. Residues serine 368 and serine 396 each carry the phosphoserine modification. Residues leucine 402–aspartate 419 are RB1 binding. Threonine 426 bears the Phosphothreonine mark.

This sequence belongs to the E2F/DP family. Component of the DRTF1/E2F transcription factor complex. Forms heterodimers with DP family members. The E2F1 complex binds specifically hypophosphorylated RB1, the interaction represses E2F1-driven transcription. During the cell cycle, RB1 becomes phosphorylated in mid-to-late G1 phase, detaches from the DRTF1/E2F complex, rendering E2F transcriptionally active. Interacts with TRRAP, which probably mediates its interaction with histone acetyltransferase complexes, leading to transcription activation. Binds TOPBP1 and EAPP. Interacts with ARID3A. Interacts with TRIM28; the interaction inhibits E2F1 acetylation through recruiting HDAC1 and represses its transcriptional activity. Interaction with KAT2B; the interaction acetylates E2F1 enhancing its DNA-binding and transcriptional activity. Interacts with BIRC2/c-IAP1 (via BIR domains). The complex TFDP1:E2F1 interacts with CEBPA; the interaction prevents CEBPA binding to target genes promoters and represses its transcriptional activity. Interacts with RRP1B. Interacts with HCFC1. Interacts with KMT2E; the interaction is probably indirect and is mediated via HCFC1. Interacts with DCAF5 and L3MBTL3; the interaction requires methylation at Lys-180 and is necessary to target E2F1 for ubiquitination by the CRL4-DCAF5 E3 ubiquitin ligase complex. Phosphorylated by CDK2 and cyclin A-CDK2 in the S-phase. Phosphorylation by CHEK2 stabilizes E2F1 upon DNA damage and regulates its effect on transcription and apoptosis. Phosphorylation at Ser-396 by GSK3B promotes interaction with USP11, leading to its deubiquitination and stabilization. Post-translationally, ubiquitinated via 'Lys-63'-linked ubiquitin, leading to its degradation. Deubiquitinated by USP11 following phosphorylation by GSK3B, promoting its stability. In terms of processing, acetylation stimulates DNA-binding. Enhanced under stress conditions such as DNA damage and inhibited by retinoblastoma protein RB1. Regulated by KAP1/TRIM28 which recruits HDAC1 to E2F1 resulting in deacetylation. Acetylated by P/CAF/KAT2B. Methylation at Lys-180 by SETD7 promotes E2F1 ubiquitin-dependent proteasomal degradation.

Its subcellular location is the nucleus. Its activity is regulated as follows. BIRC2/c-IAP1 stimulates its transcriptional activity. In terms of biological role, transcription activator that binds DNA cooperatively with DP proteins through the E2 recognition site, 5'-TTTC[CG]CGC-3' found in the promoter region of a number of genes whose products are involved in cell cycle regulation or in DNA replication. The DRTF1/E2F complex functions in the control of cell-cycle progression from G1 to S phase. E2F1 binds preferentially RB1 in a cell-cycle dependent manner. It can mediate both cell proliferation and TP53/p53-dependent apoptosis. Blocks adipocyte differentiation by binding to specific promoters repressing CEBPA binding to its target gene promoters. Directly activates transcription of PEG10. Positively regulates transcription of RRP1B. This chain is Transcription factor E2F1, found in Mus musculus (Mouse).